The sequence spans 235 residues: Serine protease SplA (235 aa).

A signal peptide spans methionine 1–alanine 35. Active-site charge relay system residues include histidine 74, aspartate 113, and serine 189.

This sequence belongs to the peptidase S1B family.

Its subcellular location is the secreted. The polypeptide is Serine protease SplA (splA) (Staphylococcus aureus (strain MSSA476)).